The chain runs to 214 residues: rRNA N(6)-adenosine-methyltransferase metl-5 (214 aa).

S-adenosyl-L-methionine is bound by residues Q25, T28, G55, C58, D78, and 106–107 (DI).

It belongs to the methyltransferase superfamily. PrmA family. As to quaternary structure, heterodimer; heterodimerizes with TRMT112/C04H5.1.

The catalysed reaction is adenosine in rRNA + S-adenosyl-L-methionine = N(6)-methyladenosine in rRNA + S-adenosyl-L-homocysteine + H(+). Its function is as follows. Catalytic subunit of a heterodimer with TRMT112/C04H5.1, which specifically methylates the 6th position of adenine in position 1717 of 18S rRNA. The polypeptide is rRNA N(6)-adenosine-methyltransferase metl-5 (Caenorhabditis elegans).